Reading from the N-terminus, the 50-residue chain is Disintegrin pyramidin-A (50 aa).

The Disintegrin domain occupies 1–47 (DCASGPCCRDCKFLKEGTICKRARGDNMDDYCNGKTCDCPRNPHKGE). 4 cysteine pairs are disulfide-bonded: Cys2–Cys11, Cys7–Cys32, Cys8–Cys37, and Cys20–Cys39. Residues 24–26 (RGD) carry the Cell attachment site motif.

The protein belongs to the venom metalloproteinase (M12B) family. P-II subfamily. P-IIa sub-subfamily. Monomer (disintegrin). Expressed by the venom gland.

It localises to the secreted. In terms of biological role, inhibits ADP-induced human platelet aggregation. This chain is Disintegrin pyramidin-A, found in Echis pyramidum leakeyi (Leakey's carpet viper).